The following is a 262-amino-acid chain: Type III pantothenate kinase (262 aa).

9 to 16 provides a ligand contact to ATP; it reads DSGNTRVK. Substrate contacts are provided by residues Tyr-93 and 100 to 103; that span reads GSDR. The active-site Proton acceptor is Asp-102. Asp-122 provides a ligand contact to K(+). Thr-125 is an ATP binding site. Thr-175 provides a ligand contact to substrate.

The protein belongs to the type III pantothenate kinase family. As to quaternary structure, homodimer. NH4(+) is required as a cofactor. It depends on K(+) as a cofactor.

The protein localises to the cytoplasm. The enzyme catalyses (R)-pantothenate + ATP = (R)-4'-phosphopantothenate + ADP + H(+). It participates in cofactor biosynthesis; coenzyme A biosynthesis; CoA from (R)-pantothenate: step 1/5. Its function is as follows. Catalyzes the phosphorylation of pantothenate (Pan), the first step in CoA biosynthesis. This Nitrosospira multiformis (strain ATCC 25196 / NCIMB 11849 / C 71) protein is Type III pantothenate kinase.